A 60-amino-acid polypeptide reads, in one-letter code: Large ribosomal subunit protein uL30 (60 aa).

This sequence belongs to the universal ribosomal protein uL30 family. In terms of assembly, part of the 50S ribosomal subunit.

This is Large ribosomal subunit protein uL30 from Shewanella sp. (strain MR-7).